The sequence spans 319 residues: L-lactate dehydrogenase (319 aa).

NAD(+)-binding positions include Val11, Asp32, Arg37, Tyr62, and 76–77 (GV). Substrate contacts are provided by residues Gln79, Arg85, and 117-120 (NPVD). NAD(+) contacts are provided by residues 115–117 (VTN) and Ser140. 145–148 (DTAR) provides a ligand contact to substrate. The beta-D-fructose 1,6-bisphosphate site is built by Arg150 and His165. His172 functions as the Proton acceptor in the catalytic mechanism. Tyr217 bears the Phosphotyrosine mark. Thr226 is a binding site for substrate.

This sequence belongs to the LDH/MDH superfamily. LDH family. In terms of assembly, homotetramer.

The protein localises to the cytoplasm. The catalysed reaction is (S)-lactate + NAD(+) = pyruvate + NADH + H(+). Its pathway is fermentation; pyruvate fermentation to lactate; (S)-lactate from pyruvate: step 1/1. With respect to regulation, allosterically activated by fructose 1,6-bisphosphate (FBP). Its function is as follows. Catalyzes the conversion of lactate to pyruvate. The polypeptide is L-lactate dehydrogenase (Thermotoga sp. (strain RQ2)).